Consider the following 350-residue polypeptide: L-threonine 3-dehydrogenase (350 aa).

Position 42 (Cys-42) interacts with Zn(2+). Active-site charge relay system residues include Thr-44 and His-47. Zn(2+) is bound by residues His-67, Glu-68, Cys-97, Cys-100, Cys-103, and Cys-111. NAD(+) contacts are provided by residues Leu-179, Glu-199, Arg-204, 266–268 (LGL), and 291–292 (IT).

Belongs to the zinc-containing alcohol dehydrogenase family. In terms of assembly, homotetramer. Requires Zn(2+) as cofactor.

It is found in the cytoplasm. It catalyses the reaction L-threonine + NAD(+) = (2S)-2-amino-3-oxobutanoate + NADH + H(+). The protein operates within amino-acid degradation; L-threonine degradation via oxydo-reductase pathway; glycine from L-threonine: step 1/2. In terms of biological role, catalyzes the NAD(+)-dependent oxidation of L-threonine to 2-amino-3-ketobutyrate. To a lesser extent, also catalyzes the oxidation of L-serine. This chain is L-threonine 3-dehydrogenase, found in Thermococcus kodakarensis (strain ATCC BAA-918 / JCM 12380 / KOD1) (Pyrococcus kodakaraensis (strain KOD1)).